A 506-amino-acid polypeptide reads, in one-letter code: MGKIKPDEIRSIIKQQIQQYQQEVASVTIGTVFQVGDGIAHIYGLDDVMAGELLEFQDNTIGIALNLETKSVGVVLMGDGTTIQEGSFVRATGKIAQIPVGAAFLGRVVNPLALPIDGKGEIKSDINRIIESPAPGIICRRSIHEPLQTGILAIDSMIPIGRGQRELIIGDRQTGKTAICIDTIINQKGKNIVCVYVAIGQKASSIAQVVNILQERGALEYTIIVAATADSPATLQYLAPYAGATLAEFFMYNGQHTLIIYDDLTKQAQAYREISLLLRRPPGREAYPGDVFYLHSRLLERAAKLNEKLGGGSMTALPVVETQEGDISAYIPTNVISITDGQIFLSADLFNANVRPAINVGVSVSRVGSAAQPKAMKQVAGKLKLELAQFAELEAFSQFASDLDQSTQKQLARGQRLRELLKQVQHSPLNLENQVSAIFAGTHGYLDVISIEHIPIFLVGLWQHLVNHKPKYGEILNSTNTFSEEAQAILIESLKYLTEEFLPPVK.

Residue 170 to 177 (GDRQTGKT) participates in ATP binding.

It belongs to the ATPase alpha/beta chains family. As to quaternary structure, F-type ATPases have 2 components, CF(1) - the catalytic core - and CF(0) - the membrane proton channel. CF(1) has five subunits: alpha(3), beta(3), gamma(1), delta(1), epsilon(1). CF(0) has four main subunits: a, b, b' and c.

The protein resides in the plastid membrane. The enzyme catalyses ATP + H2O + 4 H(+)(in) = ADP + phosphate + 5 H(+)(out). Functionally, produces ATP from ADP in the presence of a proton gradient across the membrane. The alpha chain is a regulatory subunit. The chain is ATP synthase subunit alpha, plastid from Prototheca wickerhamii.